Reading from the N-terminus, the 81-residue chain is Antitoxin MT2731 (81 aa).

Functionally, antitoxin component of a type II toxin-antitoxin (TA) system. Neutralizes the effect of cognate toxin MT2730. This chain is Antitoxin MT2731, found in Mycobacterium tuberculosis (strain CDC 1551 / Oshkosh).